The chain runs to 223 residues: Cytidylate kinase (223 aa).

A disordered region spans residues 1 to 23 (MSTSPLVIAIDGPSGSGKSSTSR). 12-20 (GPSGSGKSS) contributes to the ATP binding site.

This sequence belongs to the cytidylate kinase family. Type 1 subfamily.

It is found in the cytoplasm. The catalysed reaction is CMP + ATP = CDP + ADP. It carries out the reaction dCMP + ATP = dCDP + ADP. The sequence is that of Cytidylate kinase from Cutibacterium acnes (strain DSM 16379 / KPA171202) (Propionibacterium acnes).